The chain runs to 418 residues: Somatostatin receptor type 3 (418 aa).

Positions 1-21 (MDMLHPSSVSTTSEPENASSA) are disordered. Topologically, residues 1 to 43 (MDMLHPSSVSTTSEPENASSAWPPDATLGNVSAGPSPAGLAVS) are extracellular. Positions 7 to 20 (SSVSTTSEPENASS) are enriched in polar residues. Asn17 and Asn30 each carry an N-linked (GlcNAc...) asparagine glycan. The chain crosses the membrane as a helical span at residues 44-69 (GVLIPLVYLVVCVVGLLGNSLVIYVV). At 70–79 (LRHTASPSVT) the chain is on the cytoplasmic side. The chain crosses the membrane as a helical span at residues 80 to 101 (NVYILNLALADELFMLGLPFLA). Residues 102–116 (AQNALSYWPFGSLMC) are Extracellular-facing. A disulfide bridge connects residues Cys116 and Cys191. The chain crosses the membrane as a helical span at residues 117 to 138 (RLVMAVDGINQFTSIFCLTVMS). Residues 139–161 (VDRYLAVVHPTRSARWRTAPVAR) are Cytoplasmic-facing. Residues 162-181 (TVSAAVWVASAVVVLPVVVF) traverse the membrane as a helical segment. At 182-205 (SGVPRGMSTCHMQWPEPAAAWRAG) the chain is on the extracellular side. Residues 206–231 (FIIYTAALGFFGPLLVICLCYLLIVV) form a helical membrane-spanning segment. Residues 232–257 (KVRSAGRRVWAPSCQRRRRSERRVTR) are Cytoplasmic-facing. The chain crosses the membrane as a helical span at residues 258–279 (MVVAVVALFVLCWMPFYVLNIV). Residues 280–293 (NVVCPLPEEPAFFG) are Extracellular-facing. The chain crosses the membrane as a helical span at residues 294–316 (LYFLVVALPYANSCANPILYGFL). At 317–418 (SYRFKQGFRR…KSSTMRISYL (102 aa)) the chain is on the cytoplasmic side. Phosphoserine is present on residues Ser332 and Ser337. The segment at 335–418 (VRSQEPTVGP…KSSTMRISYL (84 aa)) is disordered. Thr348 carries the post-translational modification Phosphothreonine. Residues 348–360 (TEEEDEEEEDGEE) show a composition bias toward acidic residues. Over residues 361-371 (SREGGKGKEMN) the composition is skewed to basic and acidic residues. 2 stretches are compositionally biased toward polar residues: residues 373 to 385 (RVSQITQPGTSGQ) and 395 to 418 (KEQQLLPQEASTGEKSSTMRISYL).

Belongs to the G-protein coupled receptor 1 family. As to quaternary structure, homodimer and heterodimer with SSTR2. Heterodimerization with SSTR2 inactivates SSTR3 receptor function. In terms of processing, phosphorylated. Phosphorylation increases upon somatostatin binding. In terms of tissue distribution, brain, pituitary and pancreas.

It is found in the cell membrane. Functionally, receptor for somatostatin-14 and -28. This receptor is coupled via pertussis toxin sensitive G proteins to inhibition of adenylyl cyclase. This chain is Somatostatin receptor type 3 (SSTR3), found in Homo sapiens (Human).